The primary structure comprises 459 residues: MLTQEIIIVILAAGKGTRMKSNHPKVLHFLGGKTILEHVIETAQSIKPKKIILVYSDQKKPVLSNIYNIPIQWIIQKKPQGTGHAILLAIKKISDNTEILVLYGDVPFISPVSIKKLQKSKKQSKISLLTAKVKNPNGYGRILRKKGKVISIIEDQDASNEQKNIKEIYSGIFIAQSKDLTRWLKKIDKKNEKQEFYATDIIALAHLEGSFIKTIEPLNYEEILGINNKLQLSNLEKIFQKKQINKLLINGVTIKDPSHFIFRGTLQHGQNVEIDTGVILENNVILGDDVKIGPGCIIRNSSIDSNTNIQAYTIIENSKIGKGCIIGPFAHLRSNTLLDRNVHIGNFVETKDTFIKNESKVKHLSYLGNSEIGSKVNIGAGSITCNYDGANKFKTIIGDNVLVGSNTQLIAPIKIAKNTTIAAGTTVTKDVNTPCLVYNTKEQKYKKNWMRSKKIIKKN.

Positions 1–229 are pyrophosphorylase; sequence MLTQEIIIVI…YEEILGINNK (229 aa). UDP-N-acetyl-alpha-D-glucosamine contacts are provided by residues 11 to 14, Lys25, Gln76, 81 to 82, 103 to 105, Gly140, Glu154, and Asn227; these read LAAG, GT, and YGD. Position 105 (Asp105) interacts with Mg(2+). Asn227 contributes to the Mg(2+) binding site. Residues 230 to 250 form a linker region; that stretch reads LQLSNLEKIFQKKQINKLLIN. Positions 251-459 are N-acetyltransferase; sequence GVTIKDPSHF…MRSKKIIKKN (209 aa). Positions 333 and 351 each coordinate UDP-N-acetyl-alpha-D-glucosamine. His363 (proton acceptor) is an active-site residue. Residues Tyr366 and Asn377 each contribute to the UDP-N-acetyl-alpha-D-glucosamine site. Residues Ala380, 386-387, Ser405, and Ala423 each bind acetyl-CoA; that span reads NY.

In the N-terminal section; belongs to the N-acetylglucosamine-1-phosphate uridyltransferase family. It in the C-terminal section; belongs to the transferase hexapeptide repeat family. Homotrimer. The cofactor is Mg(2+).

It is found in the cytoplasm. It carries out the reaction alpha-D-glucosamine 1-phosphate + acetyl-CoA = N-acetyl-alpha-D-glucosamine 1-phosphate + CoA + H(+). It catalyses the reaction N-acetyl-alpha-D-glucosamine 1-phosphate + UTP + H(+) = UDP-N-acetyl-alpha-D-glucosamine + diphosphate. Its pathway is nucleotide-sugar biosynthesis; UDP-N-acetyl-alpha-D-glucosamine biosynthesis; N-acetyl-alpha-D-glucosamine 1-phosphate from alpha-D-glucosamine 6-phosphate (route II): step 2/2. The protein operates within nucleotide-sugar biosynthesis; UDP-N-acetyl-alpha-D-glucosamine biosynthesis; UDP-N-acetyl-alpha-D-glucosamine from N-acetyl-alpha-D-glucosamine 1-phosphate: step 1/1. It participates in bacterial outer membrane biogenesis; LPS lipid A biosynthesis. Catalyzes the last two sequential reactions in the de novo biosynthetic pathway for UDP-N-acetylglucosamine (UDP-GlcNAc). The C-terminal domain catalyzes the transfer of acetyl group from acetyl coenzyme A to glucosamine-1-phosphate (GlcN-1-P) to produce N-acetylglucosamine-1-phosphate (GlcNAc-1-P), which is converted into UDP-GlcNAc by the transfer of uridine 5-monophosphate (from uridine 5-triphosphate), a reaction catalyzed by the N-terminal domain. This chain is Bifunctional protein GlmU, found in Buchnera aphidicola subsp. Acyrthosiphon pisum (strain 5A).